Here is a 134-residue protein sequence, read N- to C-terminus: Translation initiation factor 2 subunit beta (134 aa).

The protein belongs to the eIF-2-beta/eIF-5 family. Heterotrimer composed of an alpha, a beta and a gamma chain.

EIF-2 functions in the early steps of protein synthesis by forming a ternary complex with GTP and initiator tRNA. The sequence is that of Translation initiation factor 2 subunit beta from Pyrobaculum arsenaticum (strain DSM 13514 / JCM 11321 / PZ6).